The chain runs to 884 residues: Probable LRR receptor-like serine/threonine-protein kinase PAM74 (884 aa).

Positions 1–23 (MDSPCWLLLLLLGAFAIIGCVQA) are cleaved as a signal peptide. The Extracellular portion of the chain corresponds to 24–510 (QDQQEFISLD…TEKNSKKKFP (487 aa)). Residues Asn-143, Asn-182, Asn-200, Asn-256, Asn-289, Asn-400, Asn-403, Asn-417, Asn-433, Asn-444, Asn-465, and Asn-470 are each glycosylated (N-linked (GlcNAc...) asparagine). 3 LRR repeats span residues 412–433 (RVLS…AIQN), 436–457 (HLEK…FLAQ), and 460–480 (SLVI…QGLR). A helical transmembrane segment spans residues 511–531 (VVIVASVASVAIIVAVLVIIF). Topologically, residues 532-884 (VLSKKKSSTV…FDTELFPRAR (353 aa)) are cytoplasmic. Thr-570 carries the phosphothreonine modification. The Protein kinase domain maps to 579–852 (NNFQRVVGEG…QVANELKECL (274 aa)). ATP is bound by residues 585–593 (VGEGGFGVV) and Lys-607. The residue at position 652 (Tyr-652) is a Phosphotyrosine. Catalysis depends on Asp-704, which acts as the Proton acceptor. At Ser-738 the chain carries Phosphoserine. A phosphothreonine mark is found at Thr-739 and Thr-744. Tyr-752 is subject to Phosphotyrosine.

It belongs to the protein kinase superfamily. Ser/Thr protein kinase family. In terms of assembly, binds to the ammonium transporter AMT1-1.

Its subcellular location is the membrane. It catalyses the reaction L-seryl-[protein] + ATP = O-phospho-L-seryl-[protein] + ADP + H(+). The enzyme catalyses L-threonyl-[protein] + ATP = O-phospho-L-threonyl-[protein] + ADP + H(+). Functionally, required for accurate photosynthesis. This Arabidopsis thaliana (Mouse-ear cress) protein is Probable LRR receptor-like serine/threonine-protein kinase PAM74 (PAM74).